The chain runs to 87 residues: Putative regulatory protein GTNG_1019 (87 aa).

It belongs to the RemA family.

In Geobacillus thermodenitrificans (strain NG80-2), this protein is Putative regulatory protein GTNG_1019.